We begin with the raw amino-acid sequence, 120 residues long: MIEIFKDTGATHDLVYHSKINTFVWDVEFDIVLSDSKELNKCYFVKCFNPYRINGKCDFAVSSIDIFSEGKRLLIENEFNFKITKAVHVATSKDVTEIVLHLSERISSPFPIVKEVVYLD.

It belongs to the DSR anti-defense 1 family. In terms of assembly, interacts with Bacillus subtilis DSR2 (via C-terminus) in a 2:4 ratio; this interaction leads to the absence of activation of the NADase defense activity of DSR2.

In terms of biological role, counteracts the defense-associated sirtuin 2 (DSR2) defense system of the host. Inhibits the NADase activity of host DSR2 by competing with the tail tube protein that normally activates DSR2. In Bacillus subtilis (strain 168), this protein is SPbeta prophage-derived DSR anti-defense 1 (yotI).